A 91-amino-acid polypeptide reads, in one-letter code: Large ribosomal subunit protein bL27 (91 aa).

The segment at Met-1–Tyr-20 is disordered.

It belongs to the bacterial ribosomal protein bL27 family.

This is Large ribosomal subunit protein bL27 from Deinococcus geothermalis (strain DSM 11300 / CIP 105573 / AG-3a).